Here is a 368-residue protein sequence, read N- to C-terminus: Aminomethyltransferase (368 aa).

It belongs to the GcvT family. In terms of assembly, the glycine cleavage system is composed of four proteins: P, T, L and H.

The enzyme catalyses N(6)-[(R)-S(8)-aminomethyldihydrolipoyl]-L-lysyl-[protein] + (6S)-5,6,7,8-tetrahydrofolate = N(6)-[(R)-dihydrolipoyl]-L-lysyl-[protein] + (6R)-5,10-methylene-5,6,7,8-tetrahydrofolate + NH4(+). Functionally, the glycine cleavage system catalyzes the degradation of glycine. The chain is Aminomethyltransferase from Alkaliphilus oremlandii (strain OhILAs) (Clostridium oremlandii (strain OhILAs)).